The sequence spans 681 residues: Envelope glycoprotein (681 aa).

Residues 1–18 (MKTIYFLISLILIQSIKT) form the signal peptide. Residues 19 to 648 (LPVLEIASNS…GLGGKWWTSD (630 aa)) are Extracellular-facing. A receptor-binding region spans residues 38–188 (SGTLQKTEDV…FSRQGQGYRH (151 aa)). Residues Asn94, Asn171, Asn190, Asn202, Asn207, Asn219, and Asn223 are each glycosylated (N-linked (GlcNAc...) asparagine; by host). Positions 223-428 (NQTCPPSLKP…PDSSPTTRPP (206 aa)) are disordered. 2 stretches are compositionally biased toward polar residues: residues 236-260 (PTVT…MNPS) and 278-315 (PHTT…TNPS). Residues 277–455 (GPHTTLNVVT…PFLDGLINTE (179 aa)) are mucin-like region. Asn310, Asn323, Asn336, Asn350, Asn360, Asn364, Asn381, Asn397, Asn475, and Asn487 each carry an N-linked (GlcNAc...) asparagine; by host glycan. Over residues 327 to 347 (PTTQPATLLNNTNTTPTYNTL) the composition is skewed to low complexity. 2 stretches are compositionally biased toward polar residues: residues 348–365 (KYNL…TNND) and 373–394 (SEQT…TTGQ). Positions 395–428 (DTNSTTNIIMTTSDITSKHPTNSSPDSSPTTRPP) are enriched in low complexity. Residues 529–549 (GLSWIPFFGPGIEGLYTAGLI) are fusion peptide. N-linked (GlcNAc...) asparagine; by host glycosylation is found at Asn564 and Asn619. A helical membrane pass occupies residues 649–669 (WGVLTNLGILLLLSIAVLIAL). Topologically, residues 670–681 (SCICRIFTKYIG) are cytoplasmic. S-palmitoyl cysteine; by host attachment occurs at residues Cys671 and Cys673.

Belongs to the filoviruses glycoprotein family. In terms of assembly, homotrimer; each monomer consists of a GP1 and a GP2 subunit linked by disulfide bonds. The resulting peplomers (GP1,2) protrude from the virus surface as spikes. GP1,2 interacts with human CD209 and CLEC4M (collectively referred to as DC-SIGN(R)). Asialoglycoprotein receptor (ASGP-R) may be a liver-specific receptor for GP1,2. Members of the Tyro3 receptor tyrosine kinase family may be cell entry factors interacting with GP1,2. In terms of processing, N-glycosylated. Post-translationally, O-glycosylated in the mucin-like region. Specific enzymatic cleavages in vivo yield mature proteins. The precursor is processed into GP1 and GP2 by host cell furin in the trans Golgi, and maybe by other host proteases, to yield the mature GP1 and GP2 proteins. The cleavage site corresponds to the furin optimal cleavage sequence [KR]-X-[KR]-R. In terms of processing, GP1 is phosphorylated on serine residues between residues 260 and 273.

Its subcellular location is the virion membrane. The protein resides in the host cell membrane. GP1 is responsible for binding to the receptor(s) on target cells. Interacts with CD209/DC-SIGN and CLEC4M/DC-SIGNR which act as cofactors for virus entry into the host cell. Binding to CD209 and CLEC4M, which are respectively found on dendritic cells (DCs), and on endothelial cells of liver sinusoids and lymph node sinuses, facilitate infection of macrophages and endothelial cells. These interactions not only facilitate virus cell entry, but also allow capture of viral particles by DCs and subsequent transmission to susceptible cells without DCs infection (trans infection). Functionally, GP2 acts as a class I viral fusion protein. Under the current model, the protein has at least 3 conformational states: pre-fusion native state, pre-hairpin intermediate state, and post-fusion hairpin state. During viral and target cell membrane fusion, the coiled coil regions (heptad repeats) assume a trimer-of-hairpins structure, positioning the fusion peptide in close proximity to the C-terminal region of the ectodomain. The formation of this structure appears to drive apposition and subsequent fusion of viral and target cell membranes. Responsible for penetration of the virus into the cell cytoplasm by mediating the fusion of the membrane of the endocytosed virus particle with the endosomal membrane. Low pH in endosomes induces an irreversible conformational change in GP2, releasing the fusion hydrophobic peptide. This Chlorocebus aethiops (Green monkey) protein is Envelope glycoprotein (GP).